The following is a 308-amino-acid chain: Ribonuclease Z (308 aa).

Zn(2+) is bound by residues histidine 62, histidine 64, aspartate 66, histidine 67, histidine 140, aspartate 211, and histidine 269. Aspartate 66 serves as the catalytic Proton acceptor.

It belongs to the RNase Z family. In terms of assembly, homodimer. Requires Zn(2+) as cofactor.

It carries out the reaction Endonucleolytic cleavage of RNA, removing extra 3' nucleotides from tRNA precursor, generating 3' termini of tRNAs. A 3'-hydroxy group is left at the tRNA terminus and a 5'-phosphoryl group is left at the trailer molecule.. Its function is as follows. Zinc phosphodiesterase, which displays some tRNA 3'-processing endonuclease activity. Probably involved in tRNA maturation, by removing a 3'-trailer from precursor tRNA. The chain is Ribonuclease Z from Treponema denticola (strain ATCC 35405 / DSM 14222 / CIP 103919 / JCM 8153 / KCTC 15104).